The following is a 130-amino-acid chain: Phosphoribosyl-AMP cyclohydrolase (130 aa).

Mg(2+) is bound at residue Asp80. Cys81 contributes to the Zn(2+) binding site. Mg(2+) contacts are provided by Asp82 and Asp84. Zn(2+)-binding residues include Cys98 and Cys105.

Belongs to the PRA-CH family. Homodimer. It depends on Mg(2+) as a cofactor. Zn(2+) serves as cofactor.

The protein localises to the cytoplasm. It carries out the reaction 1-(5-phospho-beta-D-ribosyl)-5'-AMP + H2O = 1-(5-phospho-beta-D-ribosyl)-5-[(5-phospho-beta-D-ribosylamino)methylideneamino]imidazole-4-carboxamide. It functions in the pathway amino-acid biosynthesis; L-histidine biosynthesis; L-histidine from 5-phospho-alpha-D-ribose 1-diphosphate: step 3/9. Catalyzes the hydrolysis of the adenine ring of phosphoribosyl-AMP. The protein is Phosphoribosyl-AMP cyclohydrolase of Oleidesulfovibrio alaskensis (strain ATCC BAA-1058 / DSM 17464 / G20) (Desulfovibrio alaskensis).